Here is a 991-residue protein sequence, read N- to C-terminus: Antigenic heat-stable 120 kDa protein (991 aa).

Residues 1 to 10 (YENDEEYESG) show a composition bias toward acidic residues. Disordered regions lie at residues 1-63 (YEND…TSDP) and 738-789 (KAVS…KPRD). The span at 36–63 (TPASSTQSTPSISTLSDTISHDGQTSDP) shows a compositional bias: polar residues. Residues 743–789 (GVDKSTARPEDKQALKDAASEVALDRETQNFTKGLKEQNLEKPKPRD) are compositionally biased toward basic and acidic residues.

Its subcellular location is the cytoplasm. The polypeptide is Antigenic heat-stable 120 kDa protein (sca4) (Rickettsia australis).